A 127-amino-acid polypeptide reads, in one-letter code: Protein ApaG (127 aa).

Residues 3–127 (DDPRYRVEVE…FVLSVPRTLH (125 aa)) form the ApaG domain.

This chain is Protein ApaG, found in Xanthomonas campestris pv. campestris (strain 8004).